The chain runs to 383 residues: Na(+)/H(+) antiporter NhaA (383 aa).

The next 11 membrane-spanning stretches (helical) occupy residues 10-30, 56-76, 91-111, 121-141, 150-170, 174-194, 206-226, 254-274, 289-308, 327-347, and 355-375; these read LIGG…NNSP, LMHW…GLEI, IITP…IYLS, GWAI…ALLG, LLVI…IAIF, SLSL…IICN, VVLG…ATLA, PWII…ISFS, IIWG…LAVF, GISL…VLAF, and AIKI…YIVL.

This sequence belongs to the NhaA Na(+)/H(+) (TC 2.A.33) antiporter family.

The protein resides in the cell inner membrane. The catalysed reaction is Na(+)(in) + 2 H(+)(out) = Na(+)(out) + 2 H(+)(in). Na(+)/H(+) antiporter that extrudes sodium in exchange for external protons. The chain is Na(+)/H(+) antiporter NhaA from Francisella tularensis subsp. mediasiatica (strain FSC147).